The primary structure comprises 503 residues: V-type proton ATPase subunit B (503 aa).

R378 is an ATP binding site. S491, S492, S502, and S503 each carry phosphoserine.

The protein belongs to the ATPase alpha/beta chains family. V-ATPase is a heteromultimeric enzyme composed of a peripheral catalytic V1 complex (components A to H) attached to an integral membrane V0 proton pore complex (components: a, c, c', c'', d, e, f and VOA1). Interacts with rav1.

Its subcellular location is the vacuole membrane. Functionally, non-catalytic subunit of the V1 complex of vacuolar(H+)-ATPase (V-ATPase), a multisubunit enzyme composed of a peripheral complex (V1) that hydrolyzes ATP and a membrane integral complex (V0) that translocates protons. V-ATPase is responsible for acidifying and maintaining the pH of intracellular compartments. The protein is V-type proton ATPase subunit B of Schizosaccharomyces pombe (strain 972 / ATCC 24843) (Fission yeast).